The primary structure comprises 544 residues: Zinc finger and SCAN domain-containing protein 25 (544 aa).

Glycyl lysine isopeptide (Lys-Gly) (interchain with G-Cter in SUMO2) cross-links involve residues K3 and K22. Positions 42–124 (RLRFRQFRYQ…AMVEDLTERA (83 aa)) constitute an SCAN box domain. K128 is covalently cross-linked (Glycyl lysine isopeptide (Lys-Gly) (interchain with G-Cter in SUMO2)). A disordered region spans residues 157–189 (VEVKPEWGMPPGEGVQGPDPGTEEQLSQDPGDE). Glycyl lysine isopeptide (Lys-Gly) (interchain with G-Cter in SUMO2) cross-links involve residues K278 and K285. C2H2-type zinc fingers lie at residues 348–370 (FQCP…QRTH), 375–397 (YGCV…QRTH), 403–425 (YVCS…QRSH), 431–453 (YKCG…RRTH), 459–480 (YTCE…RRAH), and 486–508 (YGCQ…QRIH). The C2H2-type 7; degenerate zinc finger occupies 514–536 (YHCPACGRSFNQRSILNRHQKTQ).

Belongs to the krueppel C2H2-type zinc-finger protein family.

The protein localises to the nucleus. May be involved in transcriptional regulation. This chain is Zinc finger and SCAN domain-containing protein 25 (ZSCAN25), found in Homo sapiens (Human).